Consider the following 158-residue polypeptide: 6,7-dimethyl-8-ribityllumazine synthase (158 aa).

5-amino-6-(D-ribitylamino)uracil is bound by residues F22, 57 to 59 (AYE), and 84 to 86 (TVI). Residue 89–90 (GT) participates in (2S)-2-hydroxy-3-oxobutyl phosphate binding. H92 serves as the catalytic Proton donor. F117 contributes to the 5-amino-6-(D-ribitylamino)uracil binding site. R131 contacts (2S)-2-hydroxy-3-oxobutyl phosphate.

This sequence belongs to the DMRL synthase family. Forms an icosahedral capsid composed of 60 subunits, arranged as a dodecamer of pentamers.

The catalysed reaction is (2S)-2-hydroxy-3-oxobutyl phosphate + 5-amino-6-(D-ribitylamino)uracil = 6,7-dimethyl-8-(1-D-ribityl)lumazine + phosphate + 2 H2O + H(+). It participates in cofactor biosynthesis; riboflavin biosynthesis; riboflavin from 2-hydroxy-3-oxobutyl phosphate and 5-amino-6-(D-ribitylamino)uracil: step 1/2. Its function is as follows. Catalyzes the formation of 6,7-dimethyl-8-ribityllumazine by condensation of 5-amino-6-(D-ribitylamino)uracil with 3,4-dihydroxy-2-butanone 4-phosphate. This is the penultimate step in the biosynthesis of riboflavin. This is 6,7-dimethyl-8-ribityllumazine synthase from Pectobacterium carotovorum subsp. carotovorum (strain PC1).